The chain runs to 157 residues: Vesicle transport protein SFT2B (157 aa).

Methionine 1 is modified (N-acetylmethionine). Residues 1-36 (MDKLKKVLSGQDTEDRSGLSEVVESSSLSWSTRIKG) are Cytoplasmic-facing. Residue serine 9 is modified to Phosphoserine. A helical membrane pass occupies residues 37-57 (FIVCFALGILCSLLGTLLLWV). At 58–61 (SRKG) the chain is on the lumenal side. Residues 62-82 (LFAVFYTLGNITSIGSTMFLM) form a helical membrane-spanning segment. Over 83–96 (GPLKQLKRMFEPTR) the chain is Cytoplasmic. The helical transmembrane segment at 97-117 (LIATILVLLFFVLTLCSAFLW) threads the bilayer. The Lumenal portion of the chain corresponds to 118–120 (NKG). A helical transmembrane segment spans residues 121-141 (LALIFCILQSLALTWYSLSYI). Residues 142–157 (PYARDAVKKCFAVCLT) are Cytoplasmic-facing.

Belongs to the SFT2 family.

It is found in the membrane. May be involved in fusion of retrograde transport vesicles derived from an endocytic compartment with the Golgi complex. This Rattus norvegicus (Rat) protein is Vesicle transport protein SFT2B.